Consider the following 570-residue polypeptide: Proline--tRNA ligase (570 aa).

This sequence belongs to the class-II aminoacyl-tRNA synthetase family. ProS type 1 subfamily. As to quaternary structure, homodimer.

It is found in the cytoplasm. The catalysed reaction is tRNA(Pro) + L-proline + ATP = L-prolyl-tRNA(Pro) + AMP + diphosphate. Functionally, catalyzes the attachment of proline to tRNA(Pro) in a two-step reaction: proline is first activated by ATP to form Pro-AMP and then transferred to the acceptor end of tRNA(Pro). As ProRS can inadvertently accommodate and process non-cognate amino acids such as alanine and cysteine, to avoid such errors it has two additional distinct editing activities against alanine. One activity is designated as 'pretransfer' editing and involves the tRNA(Pro)-independent hydrolysis of activated Ala-AMP. The other activity is designated 'posttransfer' editing and involves deacylation of mischarged Ala-tRNA(Pro). The misacylated Cys-tRNA(Pro) is not edited by ProRS. In Acidithiobacillus ferrooxidans (strain ATCC 23270 / DSM 14882 / CIP 104768 / NCIMB 8455) (Ferrobacillus ferrooxidans (strain ATCC 23270)), this protein is Proline--tRNA ligase.